A 152-amino-acid polypeptide reads, in one-letter code: Transcriptional repressor NrdR (152 aa).

A zinc finger spans residues 3–34 (CPFCNAADSKVIDSRLAAEGCQIRRRRECVSC). The ATP-cone domain maps to 49–139 (PRVIKSNGKN…VYQDFQDVEA (91 aa)).

This sequence belongs to the NrdR family. Zn(2+) is required as a cofactor.

In terms of biological role, negatively regulates transcription of bacterial ribonucleotide reductase nrd genes and operons by binding to NrdR-boxes. The chain is Transcriptional repressor NrdR from Acinetobacter baumannii (strain AB0057).